Reading from the N-terminus, the 141-residue chain is Large ribosomal subunit protein uL11 (141 aa).

Belongs to the universal ribosomal protein uL11 family. Part of the ribosomal stalk of the 50S ribosomal subunit. Interacts with L10 and the large rRNA to form the base of the stalk. L10 forms an elongated spine to which L12 dimers bind in a sequential fashion forming a multimeric L10(L12)X complex. Post-translationally, one or more lysine residues are methylated.

Functionally, forms part of the ribosomal stalk which helps the ribosome interact with GTP-bound translation factors. In Moorella thermoacetica (strain ATCC 39073 / JCM 9320), this protein is Large ribosomal subunit protein uL11.